Reading from the N-terminus, the 412-residue chain is Regulator of microtubule dynamics protein 2 (412 aa).

Residues 9 to 28 (LLLGIMAGTAGISLLVLWYH) traverse the membrane as a helical segment. Ser51 carries the phosphoserine modification. Residues 72–110 (QLQILEKLNELLTNVEELKEEIKFLKETIPKLEECIQDE) are a coiled coil. Ser121 is subject to Phosphoserine. Positions 122–153 (PQHRARKKKTTTTTVQRPATSNSSEEAESEGG) are disordered. Position 141 is a phosphothreonine (Thr141). Tyr154 carries the post-translational modification Phosphotyrosine. Residues Thr156 and Thr159 each carry the phosphothreonine modification.

This sequence belongs to the RMDN family. As to quaternary structure, interacts with microtubules.

Its subcellular location is the membrane. The protein localises to the cytoplasm. It localises to the cytoskeleton. It is found in the spindle. The protein resides in the spindle pole. The polypeptide is Regulator of microtubule dynamics protein 2 (Rmdn2) (Rattus norvegicus (Rat)).